Consider the following 190-residue polypeptide: Segregation and condensation protein B (190 aa).

It belongs to the ScpB family. In terms of assembly, homodimer. Homodimerization may be required to stabilize the binding of ScpA to the Smc head domains. Component of a cohesin-like complex composed of ScpA, ScpB and the Smc homodimer, in which ScpA and ScpB bind to the head domain of Smc. The presence of the three proteins is required for the association of the complex with DNA.

Its subcellular location is the cytoplasm. Functionally, participates in chromosomal partition during cell division. May act via the formation of a condensin-like complex containing Smc and ScpA that pull DNA away from mid-cell into both cell halves. The sequence is that of Segregation and condensation protein B from Alkaliphilus metalliredigens (strain QYMF).